A 619-amino-acid polypeptide reads, in one-letter code: MAASPGSGSANPRKFSEKIALHTQRQAEETRAFEQLMTDLTLSRVQFQKLQQLRLTQYHGGSLPNVSQLRSSASEFQPSFHQADNVRGTRHHGLVERPSRNRFHPLHRRSGDKPGRQFDGSAFGANYSSQPLDESWPRQQPPWKDEKHPGFRLTSALNRTNSDSALHTSALSTKPQDPYGGGGQSAWPAPYMGFCDGENNGHGEVASFPGPLKEENLLNVPKPLPKQLWETKEIQSLSGRPRSCDVGGGNAFPHNGQNLGLSPFLGTLNTGGSLPDLTNLHYSTPLPASLDTTDHHFGSMSVGNSVNNIPAAMTHLGIRSSSGLQSSRSNPSIQATLNKTVLSSSLNNHPQTSVPNASALHPSLRLFSLSNPSLSTTNLSGPSRRRQPPVSPLTLSPGPEAHQGFSRQLSSTSPLAPYPTSQMVSSDRSQLSFLPTEAQAQVSPPPPYPAPQELTQPLLQQPRAPEAPAQQPQAASSLPQSDFQLLPAQGSSLTNFFPDVGFDQQSMRPGPAFPQQVPLVQQGSRELQDSFHLRPSPYSNCGSLPNTILPEDSSTSLFKDLNSALAGLPEVSLNVDTPFPLEEELQIEPLSLDGLNMLSDSSMGLLDPSVEETFRADRL.

Positions 1–103 are required for interaction with HTLV-1 TAX; that stretch reads MAASPGSGSA…LVERPSRNRF (103 aa). S4 and S62 each carry phosphoserine. The segment at 103-150 is disordered; it reads FHPLHRRSGDKPGRQFDGSAFGANYSSQPLDESWPRQQPPWKDEKHPG. T160 carries the post-translational modification Phosphothreonine. At S162 the chain carries Phosphoserine; by SIK2. Residues 165 to 175 show a composition bias toward polar residues; sequence ALHTSALSTKP. The segment at 165 to 185 is disordered; that stretch reads ALHTSALSTKPQDPYGGGGQS. Residue K232 forms a Glycyl lysine isopeptide (Lys-Gly) (interchain with G-Cter in SUMO2) linkage. Phosphoserine is present on residues S273, S329, S332, S370, S391, S396, S410, and S443. The segment at 375–431 is disordered; sequence STTNLSGPSRRRQPPVSPLTLSPGPEAHQGFSRQLSSTSPLAPYPTSQMVSSDRSQL. Positions 380-401 are required for interaction with PPP2CA and PPP2R1A; it reads SGPSRRRQPPVSPLTLSPGPEA. Residues 405–431 are compositionally biased toward polar residues; the sequence is FSRQLSSTSPLAPYPTSQMVSSDRSQL.

This sequence belongs to the TORC family. Binding, as a tetramer, through its N-terminal region, with the bZIP domain of CREB1 enhances recruitment of TAF4 to the promoter. 'Arg-314' in the bZIP domain of CREB1 is essential for this interaction. Interacts (when phosphorylated at Ser-162 and Se-273) with 14-3-3 proteins. Interacts with YWHAE. Interacts (when phosphorylated at Ser-391) with phosphatase PP2A catalytic subunit PPP2CA and regulatory subunits PPP2R1A and PPP2R2A. Interacts, via the N-terminal with the ankyrin repeats of BCL3, to form a complex with CREB1 on CRE and TxRE responsive elements and represses HTLV-1 LTR-mediated transcription. In terms of assembly, (Microbial infection) Interacts with HTLV-1 protein Tax; this interaction enhances tax transcriptional activity. Phosphorylation/dephosphorylation states of Ser-273 are required for regulating transduction of CREB activity. CRTCs/TORCs are inactive when phosphorylated, and active when dephosphorylated at this site. May be phosphorylated at Ser-391 by MAPK3/ERK1 and/or MAPK1/ERK2 or by some cyclin-dependent kinases such as CDK1,CDK2 or CDK5. Following adenylyl cyclase activation, dephosphorylated at Ser-162 and Ser-273 resulting in its dissociation from 14-3-3 proteins probably promoting CRTC3 translocation into the nucleus. In terms of tissue distribution, predominantly expressed in B and T lymphocytes. Highest levels in lung. Also expressed in brain, colon, heart, kidney, ovary, and prostate. Weak expression in liver, pancreas, muscle, small intestine, spleen and stomach.

The protein resides in the nucleus. It localises to the cytoplasm. Transcriptional coactivator for CREB1 which activates transcription through both consensus and variant cAMP response element (CRE) sites. Acts as a coactivator, in the SIK/TORC signaling pathway, being active when dephosphorylated and acts independently of CREB1 'Ser-133' phosphorylation. Enhances the interaction of CREB1 with TAF4. Regulates the expression of specific CREB-activated genes such as the steroidogenic gene, StAR. Potent coactivator of PPARGC1A and inducer of mitochondrial biogenesis in muscle cells. Also coactivator for TAX activation of the human T-cell leukemia virus type 1 (HTLV-1) long terminal repeats (LTR). In Homo sapiens (Human), this protein is CREB-regulated transcription coactivator 3 (CRTC3).